The chain runs to 251 residues: Probable transcriptional regulatory protein cbdbA400 (251 aa).

This sequence belongs to the TACO1 family.

It is found in the cytoplasm. The polypeptide is Probable transcriptional regulatory protein cbdbA400 (Dehalococcoides mccartyi (strain CBDB1)).